Here is a 185-residue protein sequence, read N- to C-terminus: 3-hexulose-6-phosphate isomerase (185 aa).

The region spanning 29 to 172 is the SIS domain; it reads LADHILSSHQ…ILKLMEKKGL (144 aa). Substrate is bound by residues serine 47 and 86–91; that span reads SGSGET. Residue glutamate 152 is the Proton acceptor of the active site.

This sequence belongs to the SIS family. PHI subfamily. Homotetramer.

It catalyses the reaction D-arabino-hex-3-ulose 6-phosphate = beta-D-fructose 6-phosphate. It functions in the pathway one-carbon metabolism; formaldehyde assimilation via RuMP pathway; D-fructose 6-phosphate from D-ribulose 5-phosphate and formaldehyde: step 2/2. Catalyzes the isomerization between 3-hexulose 6-phosphate and fructose 6-phosphate. Together with HxlA, may act as a formaldehyde detoxification system. The polypeptide is 3-hexulose-6-phosphate isomerase (hxlB) (Bacillus subtilis (strain 168)).